Consider the following 222-residue polypeptide: GTP cyclohydrolase 1 (222 aa).

Positions 111, 114, and 182 each coordinate Zn(2+).

The protein belongs to the GTP cyclohydrolase I family. Homomer.

It carries out the reaction GTP + H2O = 7,8-dihydroneopterin 3'-triphosphate + formate + H(+). Its pathway is cofactor biosynthesis; 7,8-dihydroneopterin triphosphate biosynthesis; 7,8-dihydroneopterin triphosphate from GTP: step 1/1. The polypeptide is GTP cyclohydrolase 1 (Salmonella gallinarum (strain 287/91 / NCTC 13346)).